Reading from the N-terminus, the 414-residue chain is Isocitrate dehydrogenase [NADP] cytoplasmic (414 aa).

Position 2 is an N-acetylserine (S2). Y42 is modified (phosphotyrosine). 75–77 (TIT) serves as a coordination point for NADP(+). T77 contributes to the substrate binding site. An N6-acetyllysine modification is found at K81. R82 contacts NADP(+). Residues 94–100 (SPNGTIR) and R109 contribute to the substrate site. N6-succinyllysine is present on K126. Residues R132 and K212 each contribute to the substrate site. An N6-acetyllysine mark is found at K224 and K233. D252 is a Mn(2+) binding site. Residue K260 coordinates NADP(+). Mn(2+) is bound by residues D275 and D279. 310–315 (GTVTRH) provides a ligand contact to NADP(+). The residue at position 321 (K321) is an N6-acetyllysine. NADP(+) is bound at residue N328. Residue S389 is modified to Phosphoserine. K400 is modified (N6-succinyllysine).

Belongs to the isocitrate and isopropylmalate dehydrogenases family. In terms of assembly, homodimer. The cofactor is Mg(2+). Mn(2+) serves as cofactor. In terms of processing, acetylation at Lys-374 dramatically reduces catalytic activity.

The protein localises to the cytoplasm. It is found in the cytosol. The catalysed reaction is D-threo-isocitrate + NADP(+) = 2-oxoglutarate + CO2 + NADPH. Catalyzes the NADP(+)-dependent oxidative decarboxylation of isocitrate (D-threo-isocitrate) to 2-ketoglutarate (2-oxoglutarate), which is required by other enzymes such as the phytanoyl-CoA dioxygenase. Plays a critical role in the generation of NADPH, an important cofactor in many biosynthesis pathways. May act as a corneal epithelial crystallin and may be involved in maintaining corneal epithelial transparency. The polypeptide is Isocitrate dehydrogenase [NADP] cytoplasmic (IDH1) (Ovis aries (Sheep)).